Consider the following 703-residue polypeptide: WPP domain-interacting tail-anchored protein 1 (703 aa).

The segment covering 1 to 12 (METETEHDRTVS) has biased composition (basic and acidic residues). Disordered stretches follow at residues 1 to 27 (METE…SSTK) and 86 to 107 (FVSK…DDDS). The segment covering 92–107 (EDEEEPSSNVDDDDDS) has biased composition (acidic residues). Residues 118–183 (SSILNSEVKE…MEQVVEMKKQ (66 aa)) are a coiled coil. Residues 189 to 208 (RLSSGLDEQGSWSGGQTSVS) form a disordered region. The span at 198 to 208 (GSWSGGQTSVS) shows a compositional bias: polar residues. Coiled coils occupy residues 236 to 265 (LEKS…MKLY), 318 to 461 (KRED…RDKG), and 500 to 604 (STVS…SREN). The chain crosses the membrane as a helical span at residues 679–699 (FKHILVAILVILISSIAYVIS).

As to quaternary structure, homodimer. Component of Ran complexes at least composed of WIT1 or WIT2, RANGAP1 or RANGAP2, and WIP1 or WIP2 or WIP3. Interacts with WIP2, WPP1/MAF1, WPP2/MAF2, RANGAP1 and RANGAP2. Component of a ternary complex composed of WPP1, HSP70-1 and WIT1. Interacts with KAKU1. Interacts with WIP1. In terms of tissue distribution, ubiquitous.

The protein localises to the nucleus envelope. It is found in the nucleus membrane. Its function is as follows. Together with WIT2, required for the nuclear envelope docking of RANGAP proteins in root tips. The polypeptide is WPP domain-interacting tail-anchored protein 1 (WIT1) (Arabidopsis thaliana (Mouse-ear cress)).